A 324-amino-acid polypeptide reads, in one-letter code: Probable tRNA pseudouridine synthase B (324 aa).

Asp-72 functions as the Nucleophile in the catalytic mechanism. The PUA domain maps to 239-314 (LPRVVILDSA…LVIETRKVFM (76 aa)).

The protein belongs to the pseudouridine synthase TruB family. Type 2 subfamily.

The enzyme catalyses uridine(55) in tRNA = pseudouridine(55) in tRNA. Its function is as follows. Could be responsible for synthesis of pseudouridine from uracil-55 in the psi GC loop of transfer RNAs. This is Probable tRNA pseudouridine synthase B from Methanothermobacter thermautotrophicus (strain ATCC 29096 / DSM 1053 / JCM 10044 / NBRC 100330 / Delta H) (Methanobacterium thermoautotrophicum).